We begin with the raw amino-acid sequence, 323 residues long: tRNA U34 carboxymethyltransferase (323 aa).

Carboxy-S-adenosyl-L-methionine-binding positions include Lys90, Trp104, Lys109, Gly129, 182-183, Met197, Tyr201, and Arg316; that span reads IE.

The protein belongs to the class I-like SAM-binding methyltransferase superfamily. CmoB family. As to quaternary structure, homotetramer.

The enzyme catalyses carboxy-S-adenosyl-L-methionine + 5-hydroxyuridine(34) in tRNA = 5-carboxymethoxyuridine(34) in tRNA + S-adenosyl-L-homocysteine + H(+). Functionally, catalyzes carboxymethyl transfer from carboxy-S-adenosyl-L-methionine (Cx-SAM) to 5-hydroxyuridine (ho5U) to form 5-carboxymethoxyuridine (cmo5U) at position 34 in tRNAs. The polypeptide is tRNA U34 carboxymethyltransferase (Idiomarina loihiensis (strain ATCC BAA-735 / DSM 15497 / L2-TR)).